The chain runs to 362 residues: MSKEETLYSVKVDQERVPLFDEDFYKGFRSELSVRFTMAALDPRAKSNDAVTVNVITRLEHPEEDGEESDEELFQEEKFTLCTLKKGSVYQQPIDIIFSPGEEVFFERVGGDIPVYLSGTCIITNIPEEEDSSDLENDFLYGADEFSSDEEEMDDISVTSSEEEEEENGARIEELNSDEEDAEQAEEEILEKPVPKDEVAEKHSKDKLKKEEKEKKTAVDVSDSVNGKKRKTEPAGEGEQTEKKSKSTKTYPKQVLEGNVTVQDKVKGDGPAAKRKKRVSMRYIGRLTNGKVFDKNITGKPFTFNLGLEEVIKGWDVGIVGMQVGGERTIHIPAAMAYGSKRLPGIPANSDLVFDVKLLAVN.

S69 carries the post-translational modification Phosphoserine. Positions 144–274 (DEFSSDEEEM…KVKGDGPAAK (131 aa)) are disordered. 2 stretches are compositionally biased toward acidic residues: residues 146–167 (FSSD…EEEE) and 175–189 (LNSD…EEEI). S177 is subject to Phosphoserine. Positions 190 to 218 (LEKPVPKDEVAEKHSKDKLKKEEKEKKTA) are enriched in basic and acidic residues. The PPIase FKBP-type domain maps to 276–362 (KKRVSMRYIG…VFDVKLLAVN (87 aa)).

This sequence belongs to the FKBP-type PPIase family. FKBP3/4 subfamily.

The enzyme catalyses [protein]-peptidylproline (omega=180) = [protein]-peptidylproline (omega=0). In terms of biological role, PPIases accelerate the folding of proteins. It catalyzes the cis-trans isomerization of proline imidic peptide bonds in oligopeptides. This chain is Probable peptidyl-prolyl cis-trans isomerase C27F1.06c, found in Schizosaccharomyces pombe (strain 972 / ATCC 24843) (Fission yeast).